Consider the following 126-residue polypeptide: Methylglyoxal synthase (126 aa).

An MGS-like domain is found at 1–126 (MAERQKIALI…ADRLLPVITE (126 aa)). Substrate is bound by residues H12, K16, 38–41 (TGTT), and 59–60 (SG). D65 acts as the Proton donor/acceptor in catalysis. H92 is a binding site for substrate.

The protein belongs to the methylglyoxal synthase family.

It catalyses the reaction dihydroxyacetone phosphate = methylglyoxal + phosphate. Catalyzes the formation of methylglyoxal from dihydroxyacetone phosphate. In Allorhizobium ampelinum (strain ATCC BAA-846 / DSM 112012 / S4) (Agrobacterium vitis (strain S4)), this protein is Methylglyoxal synthase.